The following is a 252-amino-acid chain: Chitooligosaccharide deacetylase (252 aa).

Mg(2+) is bound by residues His61 and His125.

Belongs to the YdjC deacetylase family. ChbG subfamily. Homodimer. Mg(2+) serves as cofactor.

The protein localises to the cytoplasm. It carries out the reaction N,N'-diacetylchitobiose + H2O = N-acetyl-beta-D-glucosaminyl-(1-&gt;4)-D-glucosamine + acetate. The enzyme catalyses diacetylchitobiose-6'-phosphate + H2O = N'-monoacetylchitobiose-6'-phosphate + acetate. The protein operates within glycan degradation; chitin degradation. In terms of biological role, involved in the degradation of chitin. ChbG is essential for growth on the acetylated chitooligosaccharides chitobiose and chitotriose but is dispensable for growth on cellobiose and chitosan dimer, the deacetylated form of chitobiose. Deacetylation of chitobiose-6-P and chitotriose-6-P is necessary for both the activation of the chb promoter by the regulatory protein ChbR and the hydrolysis of phosphorylated beta-glucosides by the phospho-beta-glucosidase ChbF. Catalyzes the removal of only one acetyl group from chitobiose-6-P to yield monoacetylchitobiose-6-P, the inducer of ChbR and the substrate of ChbF. This Salmonella paratyphi A (strain ATCC 9150 / SARB42) protein is Chitooligosaccharide deacetylase.